Reading from the N-terminus, the 38-residue chain is Mu-hexatoxin-Mg1b (38 aa).

Cystine bridges form between C1–C15, C8–C20, and C14–C34. Residue S38 is modified to Serine amide.

It belongs to the neurotoxin 14 (magi-1) family. 09 (magi-1) subfamily. Expressed by the venom gland.

The protein resides in the secreted. In terms of biological role, insecticidal neurotoxin. Shows competition for site 3 of insect voltage-gated sodium channels (Nav). The polypeptide is Mu-hexatoxin-Mg1b (Macrothele gigas (Japanese funnel web spider)).